Here is a 60-residue protein sequence, read N- to C-terminus: Large ribosomal subunit protein bL32 (60 aa).

Belongs to the bacterial ribosomal protein bL32 family.

This Geobacter sulfurreducens (strain ATCC 51573 / DSM 12127 / PCA) protein is Large ribosomal subunit protein bL32.